A 335-amino-acid polypeptide reads, in one-letter code: Taste receptor type 2 member 119 (335 aa).

The Extracellular segment spans residues 1-7; that stretch reads MMEGHML. A helical membrane pass occupies residues 8 to 28; the sequence is FFLLVVVVQFLTGVLANGLIV. The Cytoplasmic portion of the chain corresponds to 29–43; that stretch reads VVNAIDLIMWKKMAP. The chain crosses the membrane as a helical span at residues 44–64; it reads LDLLLFCLATSRIILQLCILF. Topologically, residues 65 to 81 are extracellular; the sequence is AQLGLSCLVRHTLFADN. Asn81 carries N-linked (GlcNAc...) asparagine glycosylation. Residues 82–102 form a helical membrane-spanning segment; the sequence is VTFVYIINELSLWFATWLGVF. The Cytoplasmic segment spans residues 103–124; that stretch reads YCAKIATIPHPLFLWLKMRISR. The helical transmembrane segment at 125 to 145 threads the bilayer; the sequence is LVPWLILASVVYVTVTTFIHS. Residues 146–176 lie on the Extracellular side of the membrane; it reads RETSELPKQIFISFFSKNTTRVRPAHATLLS. Asn163 carries an N-linked (GlcNAc...) asparagine glycan. The chain crosses the membrane as a helical span at residues 177–197; that stretch reads VFVFGLTLPFLIFTVAVLLLL. The Cytoplasmic portion of the chain corresponds to 198–224; the sequence is SSLWNHSRQMRTMVGTREPSRHALVSA. A helical transmembrane segment spans residues 225–245; it reads MLSILSFLILYLSHDMVAVLI. Over 246–256 the chain is Extracellular; the sequence is CTQGLHFGSRT. A helical transmembrane segment spans residues 257–277; that stretch reads FAFCLLVIGMYPSLHSIVLIL. Over 278–335 the chain is Cytoplasmic; the sequence is GNPKLKRNAKTFIVHCKCCHCARAWVTSRNPRLSDLPVPATHHSANKTSCSEACIMPS.

It belongs to the G-protein coupled receptor T2R family. Expressed in subsets of taste receptor cells of the tongue and palate epithelium and exclusively in gustducin-positive cells. Expressed in 15% taste bud cells in circumvallate and foliate papillae but only in 2% in fungiform papillae. Expressed in the gastro and duodenal tissue. Not expressed in colon, liver, heart and kidney.

Its subcellular location is the membrane. Gustducin-coupled receptor implicated in the perception of bitter compounds in the oral cavity and the gastrointestinal tract. Signals through PLCB2 and the calcium-regulated cation channel TRPM5. In Mus musculus (Mouse), this protein is Taste receptor type 2 member 119 (Tas2r119).